We begin with the raw amino-acid sequence, 251 residues long: Glutamate 5-kinase (251 aa).

K7 serves as a coordination point for ATP. Substrate is bound by residues S45, D130, and N142. ATP is bound by residues 162-163 (SD) and 204-210 (TGGIVTK).

This sequence belongs to the glutamate 5-kinase family.

The protein resides in the cytoplasm. It catalyses the reaction L-glutamate + ATP = L-glutamyl 5-phosphate + ADP. It participates in amino-acid biosynthesis; L-proline biosynthesis; L-glutamate 5-semialdehyde from L-glutamate: step 1/2. Its function is as follows. Catalyzes the transfer of a phosphate group to glutamate to form L-glutamate 5-phosphate. This Campylobacter jejuni subsp. jejuni serotype O:6 (strain 81116 / NCTC 11828) protein is Glutamate 5-kinase.